Here is a 258-residue protein sequence, read N- to C-terminus: Pimeloyl-[acyl-carrier protein] methyl ester esterase (258 aa).

One can recognise an AB hydrolase-1 domain in the interval 16 to 241 (LVLLHGWGLN…GSAHAPFVSH (226 aa)). Substrate is bound by residues tryptophan 22, 82-83 (SM), and 143-147 (FLALQ). Catalysis depends on serine 82, which acts as the Nucleophile. Catalysis depends on residues aspartate 207 and histidine 235. Histidine 235 contributes to the substrate binding site.

Belongs to the AB hydrolase superfamily. Carboxylesterase BioH family. In terms of assembly, monomer.

It localises to the cytoplasm. It carries out the reaction 6-carboxyhexanoyl-[ACP] methyl ester + H2O = 6-carboxyhexanoyl-[ACP] + methanol + H(+). The protein operates within cofactor biosynthesis; biotin biosynthesis. In terms of biological role, the physiological role of BioH is to remove the methyl group introduced by BioC when the pimeloyl moiety is complete. It allows to synthesize pimeloyl-ACP via the fatty acid synthetic pathway through the hydrolysis of the ester bonds of pimeloyl-ACP esters. This chain is Pimeloyl-[acyl-carrier protein] methyl ester esterase, found in Yersinia enterocolitica serotype O:8 / biotype 1B (strain NCTC 13174 / 8081).